Reading from the N-terminus, the 405-residue chain is Syndecan-3 (405 aa).

An N-terminal signal peptide occupies residues 1 to 22 (MPAELRRLAVLLLLLSARAALA). Residues 23 to 347 (QPWRNENYER…PQKNILERKE (325 aa)) lie on the Extracellular side of the membrane. Residues 31–59 (ERPVDLEGSGDDDPFGDDELDDIYSGSGS) form a disordered region. Acidic residues predominate over residues 38–52 (GSGDDDPFGDDELDD). O-linked (Xyl...) (glycosaminoglycan) serine glycosylation is found at Ser-39, Ser-55, Ser-57, Ser-59, and Ser-66. 2 disordered regions span residues 134-159 (TTTA…ATTT) and 191-301 (TRAT…ELGN). Residues 191–201 (TRATTLETPTT) show a composition bias toward low complexity. Positions 202–237 (SIPETSVLTEVTTSRLVPSSTAKPRSLPKPSTSRTA) are enriched in polar residues. O-linked (Xyl...) (glycosaminoglycan) serine glycosylation is found at Ser-280, Ser-283, and Ser-330. The chain crosses the membrane as a helical span at residues 348–372 (VLIAVIVGGVVGALFAAFLVMLLIY). The Cytoplasmic portion of the chain corresponds to 373–405 (RMKKKDEGSYTLEEPKQANVTYQKPDKQEEFYA).

The protein belongs to the syndecan proteoglycan family. O-glycosylated within the Thr/Ser-rich region which could interact with lectin domains on other molecules. As to expression, proximal chondrogenic central core of embryonic limb buds where cartilage differentiation is being initiated.

It is found in the membrane. Its function is as follows. Cell surface proteoglycan that may bear both heparan sulfate and chondroitin sulfate. The multiple functional domains provide potential sites for mediating the adhesive cell-matrix interactions and cytoskeletal reorganization involved in limb chondrogenesis. Interaction with other matrix ligands as well as phosphorylation and shedding of the ectodomain might be involved in cell shape changes that occur during chondrogenesis. Furthermore, shedding of the ectodomain might break the adhesive interactions that promoted condensation, thus facilitating the deposition of cartilage matrix molecules. This Gallus gallus (Chicken) protein is Syndecan-3 (SDC3).